We begin with the raw amino-acid sequence, 188 residues long: uncharacterized protein (188 aa).

An L5-specific motif motif is present at residues 62–77 (ITGEKPLIKLNESTEK).

The protein resides in the mitochondrion. This is an uncharacterized protein from Dictyostelium discoideum (Social amoeba).